The primary structure comprises 592 residues: MEGKWLLCMLLVLGTAIVEAHDGHDDDVIDIEDDLDDVIEEVEDSKPDTTAPPSSPKVTYKAPVPTGEVYFADSFDRGTLSGWILSKAKKDDTDDEIAKYDGKWEVDEMKESKLPGDKGLVLMSRAKHHAISAKLNKPFLFDTKPLIVQYEVNFQNGIECGGAYVKLLSKTPELNLDQFHDKTPYTIMFGPDKCGEDYKLHFIFRHKNPKTGIYEEKHAKRPDADLKTYFTDKKTHLYTLILNPDNSFEILVDQSVVNSGNLLNDMTPPVNPSREIEDPEDRKPEDWDERPKIPDPEAVKPDDWDEDAPAKIPDEEATKPEGWLDDEPEYVPDPDAEKPEDWDEDMDGEWEAPQIANPKCESAPGCGVWQRPMIDNPNYKGKWKPPMIDNPSYQGIWKPRKIPNPDFFEDLEPFRMTPFSAIGLELWSMTSDIFFDNFIICADRRIVDDWANDGWGLKKAADGAAEPGVVGQMIEAAEERPWLWVVYILTVALPVFLVILFCCSGKKQTSAMEYKKTDAPQPDVKEEEEEKEEEKDKGDEEEEGEEKLEEKQKSDAEEDGGTVSQEEEDRKPKAEEDEILNRSPRNRKPRRE.

The first 20 residues, 1–20 (MEGKWLLCMLLVLGTAIVEA), serve as a signal peptide directing secretion. Residues 21–481 (HDGHDDDVID…QMIEAAEERP (461 aa)) are Lumenal-facing. Residues S74 and D117 each coordinate Ca(2+). K137 bears the N6-acetyllysine mark. C160 and C194 are oxidised to a cystine. 4 residues coordinate an alpha-D-glucoside: Y164, K166, Y185, and D192. The interval 260-345 (GNLLNDMTPP…AEKPEDWDED (86 aa)) is disordered. A compositionally biased stretch (basic and acidic residues) spans 274-319 (REIEDPEDRKPEDWDERPKIPDPEAVKPDDWDEDAPAKIPDEEATK). The p domain (Extended arm) stretch occupies residues 276–409 (IEDPEDRKPE…RKIPNPDFFE (134 aa)). A run of 5 repeats spans residues 278 to 290 (DPED…WDER), 295 to 307 (DPEA…WDED), 314 to 326 (DEEA…WLDD), 333 to 345 (DPDA…WDED), and 348 to 358 (GEWEAPQIANP). 2 4 X approximate repeats regions span residues 278–345 (DPED…WDED) and 348–405 (GEWE…IPNP). Over residues 323–345 (WLDDEPEYVPDPDAEKPEDWDED) the composition is skewed to acidic residues. Residues 326-359 (DEPEYVPDPDAEKPEDWDEDMDGEWEAPQIANPK) form an interaction with PPIB region. C360 and C366 form a disulfide bridge. Tandem repeats lie at residues 367–377 (GVWQRPMIDNP), 381–391 (GKWKPPMIDNP), and 395–405 (GIWKPRKIPNP). E425 is a binding site for an alpha-D-glucoside. D436 serves as a coordination point for Ca(2+). A helical transmembrane segment spans residues 482 to 502 (WLWVVYILTVALPVFLVILFC). 2 S-palmitoyl cysteine lipidation sites follow: C502 and C503. The Cytoplasmic segment spans residues 503 to 592 (CSGKKQTSAM…SPRNRKPRRE (90 aa)). The interval 503 to 592 (CSGKKQTSAM…SPRNRKPRRE (90 aa)) is sufficient to mediate interaction with SGIP1. A disordered region spans residues 511 to 592 (AMEYKKTDAP…SPRNRKPRRE (82 aa)). Residues 525-547 (KEEEEEKEEEKDKGDEEEEGEEK) show a composition bias toward acidic residues. S554 carries the post-translational modification Phosphoserine. T562 is subject to Phosphothreonine. The residue at position 564 (S564) is a Phosphoserine; by MAPK3. The residue at position 583 (S583) is a Phosphoserine.

It belongs to the calreticulin family. As to quaternary structure, interacts with MAPK3/ERK1. Interacts with KCNH2. Associates with ribosomes. Interacts with SGIP1; involved in negative regulation of endocytosis. The palmitoylated form interacts with the ribosome-translocon complex component SSR1, promoting efficient folding of glycoproteins. Interacts with SERPINA2P/SERPINA2 and with the S and Z variants of SERPINA1. Interacts with PPIB. Interacts with ZNRF4. Interacts with SMIM22. Interacts with TMX2. Interacts with TMEM35A/NACHO and CHRNA7. Interacts with reticulophagy regulators RETREG2 and RETREG3. Interacts with DNM1L; may form part of a larger protein complex at the ER-mitochondrial interface during mitochondrial fission. Interacts with ADAM7. Post-translationally, phosphorylated at Ser-564 by MAPK3/ERK1. Phosphorylation by MAPK3/ERK1 increases its association with ribosomes. Palmitoylation by DHHC6 leads to the preferential localization to the perinuclear rough ER. It mediates the association of calnexin with the ribosome-translocon complex (RTC) which is required for efficient folding of glycosylated proteins. In terms of processing, ubiquitinated, leading to proteasomal degradation. Probably ubiquitinated by ZNRF4.

It is found in the endoplasmic reticulum membrane. The protein localises to the mitochondrion membrane. Its subcellular location is the melanosome membrane. In terms of biological role, calcium-binding protein that interacts with newly synthesized monoglucosylated glycoproteins in the endoplasmic reticulum. It may act in assisting protein assembly and/or in the retention within the ER of unassembled protein subunits. It seems to play a major role in the quality control apparatus of the ER by the retention of incorrectly folded proteins. Associated with partial T-cell antigen receptor complexes that escape the ER of immature thymocytes, it may function as a signaling complex regulating thymocyte maturation. Additionally it may play a role in receptor-mediated endocytosis at the synapse. The sequence is that of Calnexin (CANX) from Pongo abelii (Sumatran orangutan).